The chain runs to 361 residues: NudC domain-containing protein 3 (361 aa).

Over residues 87-97 (KIRRKEEEEAK) the composition is skewed to basic and acidic residues. The interval 87–106 (KIRRKEEEEAKTVSAAAAEK) is disordered. Ser-146 is modified (phosphoserine). A CS domain is found at 185 to 277 (AVRENYTWSQ…VGEYWWNAIL (93 aa)). 2 positions are modified to phosphoserine: Ser-340 and Ser-355.

The polypeptide is NudC domain-containing protein 3 (NUDCD3) (Pongo abelii (Sumatran orangutan)).